Here is a 313-residue protein sequence, read N- to C-terminus: MKEKIVIALGGNAIQTKEATAEAQQTAIRRAMQNLKPLFDSPARIVISHGNGPQIGSLLIQQAKSNSDTTPAMPLDTCGAMSQGMIGYWLETEINRILTEMNSDRTVGTIVTRVEVDKDDPRFNNPTKPIGPFYTKEEVEELQKEQPDSVFKEDAGRGYRKVVASPLPQSILEHQLIRTLADGKNIVIACGGGGIPVIKKENTYEGVEAVIDKDFASEKLATLIEADTLMILTNVENVFINFNEPNQQQIDDIDVATLKKYAAQGKFAEGSMLPKIEAAIRFVESGENKKVIITNLEQAYEALIGNKGTHIHM.

This sequence belongs to the carbamate kinase family.

The protein resides in the cytoplasm. The catalysed reaction is hydrogencarbonate + NH4(+) + ATP = carbamoyl phosphate + ADP + H2O + H(+). Its pathway is metabolic intermediate metabolism; carbamoyl phosphate degradation; CO(2) and NH(3) from carbamoyl phosphate: step 1/1. The protein is Carbamate kinase 2 (arcC2) of Staphylococcus aureus (strain Mu50 / ATCC 700699).